A 159-amino-acid chain; its full sequence is Phosphopantetheine adenylyltransferase (159 aa).

Residue T10 participates in substrate binding. ATP contacts are provided by residues 10 to 11 (TF) and H18. Positions 42, 74, and 88 each coordinate substrate. ATP is bound by residues 89 to 91 (GLR), E99, and 124 to 130 (NSFISST).

Belongs to the bacterial CoaD family. As to quaternary structure, homohexamer. The cofactor is Mg(2+).

It localises to the cytoplasm. The catalysed reaction is (R)-4'-phosphopantetheine + ATP + H(+) = 3'-dephospho-CoA + diphosphate. The protein operates within cofactor biosynthesis; coenzyme A biosynthesis; CoA from (R)-pantothenate: step 4/5. Reversibly transfers an adenylyl group from ATP to 4'-phosphopantetheine, yielding dephospho-CoA (dPCoA) and pyrophosphate. This is Phosphopantetheine adenylyltransferase from Shewanella halifaxensis (strain HAW-EB4).